The chain runs to 183 residues: MDIDPYKEFGASVELLSFLPSDFFPNIRDLLDTASALYREALESPEHCSPHHTALRQAILCWGELMNLATWVGSNLEDPASRELVVSYVNVNMGLKIRQLLWFHISCLTFGRETVLEYLVSFGVWIRTPIAYRPPNAPILSTLPETTVVRRRGRSPRRRTPSPRRRRSQSPRRRRSQSRESQC.

Residues 143 to 183 (LPETTVVRRRGRSPRRRTPSPRRRRSQSPRRRRSQSRESQC) form a disordered region. The segment covering 149–176 (VRRRGRSPRRRTPSPRRRRSQSPRRRRS) has biased composition (basic residues). Phosphoserine; by host occurs at positions 155, 162, and 170. The 1; half-length repeat unit spans residues 155–161 (SPRRRTP). The 3 X 8 AA repeats of S-P-R-R-R-[PR]-S-Q stretch occupies residues 155–177 (SPRRRTPSPRRRRSQSPRRRRSQ). Residues 158 to 175 (RRTPSPRRRRSQSPRRRR) carry the Bipartite nuclear localization signal motif. Tandem repeats lie at residues 162 to 169 (SPRRRRSQ) and 170 to 177 (SPRRRRSQ). An RNA binding region spans residues 177–183 (QSRESQC).

The protein belongs to the orthohepadnavirus core antigen family. Homodimerizes, then multimerizes. Interacts with cytosol exposed regions of viral L glycoprotein present in the reticulum-to-Golgi compartment. Interacts with human FLNB. Phosphorylated form interacts with host importin alpha; this interaction depends on the exposure of the NLS, which itself depends upon genome maturation and/or phosphorylation of the capsid protein. Interacts with host NUP153. Post-translationally, phosphorylated by host SRPK1, SRPK2, and maybe protein kinase C or GAPDH. Phosphorylation is critical for pregenomic RNA packaging. Protein kinase C phosphorylation is stimulated by HBx protein and may play a role in transport of the viral genome to the nucleus at the late step during the viral replication cycle.

It is found in the virion. The protein resides in the host cytoplasm. In terms of biological role, self assembles to form an icosahedral capsid. Most capsids appear to be large particles with an icosahedral symmetry of T=4 and consist of 240 copies of capsid protein, though a fraction forms smaller T=3 particles consisting of 180 capsid proteins. Entering capsids are transported along microtubules to the nucleus. Phosphorylation of the capsid is thought to induce exposure of nuclear localization signal in the C-terminal portion of the capsid protein that allows binding to the nuclear pore complex via the importin (karyopherin-) alpha and beta. Capsids are imported in intact form through the nuclear pore into the nuclear basket, where it probably binds NUP153. Only capsids that contain the mature viral genome can release the viral DNA and capsid protein into the nucleoplasm. Immature capsids get stuck in the basket. Capsids encapsulate the pre-genomic RNA and the P protein. Pre-genomic RNA is reverse-transcribed into DNA while the capsid is still in the cytoplasm. The capsid can then either be directed to the nucleus, providing more genomes for transcription, or bud through the endoplasmic reticulum to provide new virions. This chain is Capsid protein, found in Homo sapiens (Human).